Reading from the N-terminus, the 91-residue chain is Large ribosomal subunit protein eL43 (91 aa).

The segment at 39 to 60 adopts a C4-type zinc-finger fold; that stretch reads CPFCGKDAMRRGAVGIWNCSKC.

It belongs to the eukaryotic ribosomal protein eL43 family.

The sequence is that of Large ribosomal subunit protein eL43 (rpl-37a) from Ostertagia ostertagi (Brown stomach worm).